Consider the following 352-residue polypeptide: Inhibin beta C chain (352 aa).

A signal peptide spans 1-18 (MASSLLLALLFLTPTTVV). The propeptide occupies 19-236 (NPKTEGPCPA…VEGKHRVRRR (218 aa)). Asn-111, Asn-143, Asn-161, and Asn-173 each carry an N-linked (GlcNAc...) asparagine glycan. Disulfide bonds link Cys-240/Cys-248, Cys-247/Cys-317, Cys-276/Cys-349, and Cys-280/Cys-351.

Belongs to the TGF-beta family. In terms of assembly, homodimeric or heterodimeric through association with alpha and beta subunits, linked by one or more disulfide bonds. Inhibins are heterodimers of one alpha and one beta subunit. Activins are homo- or heterodimers of beta subunits only. As to expression, mainly expressed in the adult liver.

Its subcellular location is the secreted. In terms of biological role, inhibins and activins inhibit and activate, respectively, the secretion of follitropin by the pituitary gland. Inhibins/activins are involved in regulating a number of diverse functions such as hypothalamic and pituitary hormone secretion, gonadal hormone secretion, germ cell development and maturation, erythroid differentiation, insulin secretion, nerve cell survival, embryonic axial development or bone growth, depending on their subunit composition. Inhibins appear to oppose the functions of activins. The chain is Inhibin beta C chain (Inhbc) from Mus musculus (Mouse).